A 75-amino-acid polypeptide reads, in one-letter code: Serine rich endogenous peptide 20 (75 aa).

Positions 1–25 are cleaved as a signal peptide; sequence MYKLTLCILTLSFLLLSGLSNTVLA. Positions 52–66 match the SCOOP motif motif; that stretch reads KIGASGSNSGRAPSC. Positions 54-75 are disordered; it reads GASGSNSGRAPSCNNSCKPNRP. Residues 56–58 carry the SxS motif essential for MIK2 binding motif; that stretch reads SGS. Residues 56–75 are compositionally biased toward polar residues; that stretch reads SGSNSGRAPSCNNSCKPNRP.

Belongs to the serine rich endogenous peptide (SCOOP) phytocytokine family. In terms of assembly, interacts with MIK2 (via extracellular leucine-rich repeat domain); this interaction triggers the formation of complex between MIK2 and the BAK1/SERK3 and SERK4 coreceptors, and subsequent BAK1 activation by phosphorylation. In terms of tissue distribution, mostly expressed in roots.

It is found in the cell membrane. The protein resides in the secreted. The protein localises to the extracellular space. Its subcellular location is the apoplast. Functionally, brassicaceae-specific phytocytokine (plant endogenous peptide released into the apoplast) perceived by MIK2 in a BAK1/SERK3 and SERK4 coreceptors-dependent manner, that modulates various physiological and antimicrobial processes including growth prevention and reactive oxygen species (ROS) response regulation. Inhibits root growth. The polypeptide is Serine rich endogenous peptide 20 (Arabidopsis thaliana (Mouse-ear cress)).